A 140-amino-acid polypeptide reads, in one-letter code: Small ribosomal subunit protein uS12 (140 aa).

Pro59 bears the Hydroxyproline mark.

This sequence belongs to the universal ribosomal protein uS12 family.

This chain is Small ribosomal subunit protein uS12 (RPS23), found in Encephalitozoon cuniculi (strain GB-M1) (Microsporidian parasite).